A 23-amino-acid chain; its full sequence is Pseudin-3 (23 aa).

Expressed by the skin glands.

Its subcellular location is the secreted. Functionally, possesses antifungal activity against C.albicans and is also active against E.coli and S.aureus. The chain is Pseudin-3 from Pseudis paradoxa (Paradoxical frog).